The following is a 358-amino-acid chain: Protein RecA (358 aa).

Position 78–85 (78–85) interacts with ATP; sequence GPESGGKT.

The protein belongs to the RecA family.

It is found in the cytoplasm. Functionally, can catalyze the hydrolysis of ATP in the presence of single-stranded DNA, the ATP-dependent uptake of single-stranded DNA by duplex DNA, and the ATP-dependent hybridization of homologous single-stranded DNAs. It interacts with LexA causing its activation and leading to its autocatalytic cleavage. In Deinococcus geothermalis (strain DSM 11300 / CIP 105573 / AG-3a), this protein is Protein RecA.